A 201-amino-acid polypeptide reads, in one-letter code: Protein GrpE (201 aa).

Over residues 1–11 (MTDSTNNQGTS) the composition is skewed to polar residues. The interval 1 to 40 (MTDSTNNQGTSGRPDDDHTTEEVASVFNDPGAQAPAGEPD) is disordered.

This sequence belongs to the GrpE family. Homodimer.

The protein resides in the cytoplasm. Participates actively in the response to hyperosmotic and heat shock by preventing the aggregation of stress-denatured proteins, in association with DnaK and GrpE. It is the nucleotide exchange factor for DnaK and may function as a thermosensor. Unfolded proteins bind initially to DnaJ; upon interaction with the DnaJ-bound protein, DnaK hydrolyzes its bound ATP, resulting in the formation of a stable complex. GrpE releases ADP from DnaK; ATP binding to DnaK triggers the release of the substrate protein, thus completing the reaction cycle. Several rounds of ATP-dependent interactions between DnaJ, DnaK and GrpE are required for fully efficient folding. This Beijerinckia indica subsp. indica (strain ATCC 9039 / DSM 1715 / NCIMB 8712) protein is Protein GrpE.